The sequence spans 101 residues: Cell cycle protein GpsB (101 aa).

Positions leucine 34–arginine 71 form a coiled coil.

This sequence belongs to the GpsB family. In terms of assembly, forms polymers through the coiled coil domains. Interacts with PBP1, MreC and EzrA.

Its subcellular location is the cytoplasm. In terms of biological role, divisome component that associates with the complex late in its assembly, after the Z-ring is formed, and is dependent on DivIC and PBP2B for its recruitment to the divisome. Together with EzrA, is a key component of the system that regulates PBP1 localization during cell cycle progression. Its main role could be the removal of PBP1 from the cell pole after pole maturation is completed. Also contributes to the recruitment of PBP1 to the division complex. Not essential for septum formation. The sequence is that of Cell cycle protein GpsB from Bacillus pumilus (strain SAFR-032).